The chain runs to 156 residues: Small ribosomal subunit protein uS7c (156 aa).

Belongs to the universal ribosomal protein uS7 family. As to quaternary structure, part of the 30S ribosomal subunit.

The protein resides in the plastid. It localises to the chloroplast. In terms of biological role, one of the primary rRNA binding proteins, it binds directly to 16S rRNA where it nucleates assembly of the head domain of the 30S subunit. The chain is Small ribosomal subunit protein uS7c (rps7) from Bowenia serrulata (Byfield fern).